A 387-amino-acid chain; its full sequence is GDP-mannose transporter (387 aa).

Positions 1–25 (MADTKKNDNYAIDMDKLDAESDRFR) are enriched in basic and acidic residues. Over 1-42 (MADTKKNDNYAIDMDKLDAESDRFRPPPQPQPRHSSSSHSQS) the chain is Cytoplasmic. The segment at 1 to 45 (MADTKKNDNYAIDMDKLDAESDRFRPPPQPQPRHSSSSHSQSISN) is disordered. Over residues 32-45 (PRHSSSSHSQSISN) the composition is skewed to low complexity. Residues 43 to 63 (ISNSPVLPILSYCASSILMTV) form a helical membrane-spanning segment. Residues 64-71 (TNKYVLSG) lie on the Lumenal side of the membrane. The chain crosses the membrane as a helical span at residues 72 to 92 (VQFNLNFFLLCVQSVVCIIAI). Topologically, residues 93-112 (QTCKSMGLINYRDFNSDEAK) are cytoplasmic. Residues 113–129 (KWFPISLLLIGMIYTGT) traverse the membrane as a helical segment. Topologically, residues 130–136 (KALKFLS) are lumenal. The helical transmembrane segment at 137 to 153 (IPVYTIFKNLTIILIAY) threads the bilayer. At 154 to 162 (GEVLWFGGS) the chain is on the cytoplasmic side. Residues 163–184 (VTGMALFSFGLMVLSSVIAAWA) traverse the membrane as a helical segment. Residues 185–206 (DIKHALDTSGFSGAEATSKIST) are Lumenal-facing. The chain crosses the membrane as a helical span at residues 207 to 227 (LNAGYIWMLINCLCTSTYILG). Residues 228 to 241 (MRKRIKLTNFKDFD) lie on the Cytoplasmic side of the membrane. Residues 242–262 (TMFYNNLLSIPILMIGSFIVE) traverse the membrane as a helical segment. Over 263 to 280 (DWSSENINKNFPIETRNS) the chain is Lumenal. The chain crosses the membrane as a helical span at residues 281 to 301 (LIFAMIFSGLSSVFISYTSAW). The Cytoplasmic segment spans residues 302–309 (CVRVTSST). A helical transmembrane segment spans residues 310–329 (TYSMVGALNKLPIALSGLIF). Topologically, residues 330–332 (FGD) are lumenal. A helical membrane pass occupies residues 333 to 355 (PVTVPSVSAIVVGFISGIVYSLA). At 356–387 (KVKQNAKPRTGVLPTTNPVSASTQSMRDGLKS) the chain is on the cytoplasmic side. The interval 366–387 (GVLPTTNPVSASTQSMRDGLKS) is disordered. Over residues 368 to 381 (LPTTNPVSASTQSM) the composition is skewed to polar residues.

This sequence belongs to the TPT transporter family. SLC35D subfamily. Homooligomer.

It is found in the golgi apparatus membrane. The protein localises to the cytoplasmic vesicle membrane. It localises to the endoplasmic reticulum membrane. Its function is as follows. Involved in the import of GDP-mannose from the cytoplasm into the Golgi lumen. In Coccidioides immitis (strain RS) (Valley fever fungus), this protein is GDP-mannose transporter (VRG4).